A 453-amino-acid polypeptide reads, in one-letter code: UDP-N-acetylmuramoylalanine--D-glutamate ligase (453 aa).

Position 120–126 (120–126 (GSNGKST)) interacts with ATP.

It belongs to the MurCDEF family.

It localises to the cytoplasm. The enzyme catalyses UDP-N-acetyl-alpha-D-muramoyl-L-alanine + D-glutamate + ATP = UDP-N-acetyl-alpha-D-muramoyl-L-alanyl-D-glutamate + ADP + phosphate + H(+). It participates in cell wall biogenesis; peptidoglycan biosynthesis. Functionally, cell wall formation. Catalyzes the addition of glutamate to the nucleotide precursor UDP-N-acetylmuramoyl-L-alanine (UMA). This Nitrosococcus oceani (strain ATCC 19707 / BCRC 17464 / JCM 30415 / NCIMB 11848 / C-107) protein is UDP-N-acetylmuramoylalanine--D-glutamate ligase.